A 203-amino-acid chain; its full sequence is Probable chemoreceptor glutamine deamidase CheD (203 aa).

This sequence belongs to the CheD family.

It catalyses the reaction L-glutaminyl-[protein] + H2O = L-glutamyl-[protein] + NH4(+). Functionally, probably deamidates glutamine residues to glutamate on methyl-accepting chemotaxis receptors (MCPs), playing an important role in chemotaxis. The sequence is that of Probable chemoreceptor glutamine deamidase CheD from Methylobacillus flagellatus (strain ATCC 51484 / DSM 6875 / VKM B-1610 / KT).